The chain runs to 420 residues: MSQGVTAPFARHAMAYVLAGGRGSRLMELTDWRAKPAVYFGGKSRIIDFALSNALNSGIRRIAVATQYKAHSLIRHLQRGWNFFRPERNESFDILPASQRVSEEMWYRGTADAVFQNIDIIESYDPKFIVLLAGDHVYKMDYEKMLQQHVEQGADVTVGCLEVPRAEATAFGVMHTDTTDRIISFLEKPADPPAMPGKADKSLVSMGIYVFETKFLLDELRRDAADPNSSHDFGKDIIPYIVKHGKAVAHHFDKSCRRSSSEAVSYWRDVGTVDAYWAANIDLTDIVPELDLYDREWPIWTYGEITPPAKFVHDKEGRRGEAVSSLVSGGCIISGASLRHSLLFTGVRVHSFSHVENTVVLPYADIGRSCRLKNVVIDAEVKLPAGLVVGEDPEFDAKRFRRTENGICLITRAMIEKLDA.

Alpha-D-glucose 1-phosphate-binding positions include Tyr-107, Gly-172, 187-188 (EK), and Ser-205.

The protein belongs to the bacterial/plant glucose-1-phosphate adenylyltransferase family. Homotetramer.

The catalysed reaction is alpha-D-glucose 1-phosphate + ATP + H(+) = ADP-alpha-D-glucose + diphosphate. Its pathway is glycan biosynthesis; glycogen biosynthesis. In terms of biological role, involved in the biosynthesis of ADP-glucose, a building block required for the elongation reactions to produce glycogen. Catalyzes the reaction between ATP and alpha-D-glucose 1-phosphate (G1P) to produce pyrophosphate and ADP-Glc. This is Glucose-1-phosphate adenylyltransferase from Rhodopseudomonas palustris (strain ATCC BAA-98 / CGA009).